The chain runs to 476 residues: FAD-dependent monooxygenase ausM (476 aa).

FAD contacts are provided by Glu-41, Gly-55, and Arg-114. Tyr-222 is an active-site residue. Residues Asp-314 and Ala-327 each coordinate FAD. The chain crosses the membrane as a helical span at residues 447–467 (LGSTPIHMLTLLLPCLFYFMY).

It belongs to the paxM FAD-dependent monooxygenase family. FAD serves as cofactor.

Its subcellular location is the membrane. Its pathway is secondary metabolite biosynthesis; terpenoid biosynthesis. Its function is as follows. FAD-dependent monooxygenase; part of the gene cluster A that mediates the biosynthesis of the fungal meroterpenoid acetoxydehydroaustin. The first step of the pathway is the synthesis of 3,5-dimethylorsellinic acid by the polyketide synthase ausA. 3,5-dimethylorsellinic acid is then prenylated by the polyprenyl transferase ausN. Further epoxidation by the FAD-dependent monooxygenase ausM and cyclization by the probable terpene cyclase ausL lead to the formation of protoaustinoid A. Protoaustinoid A is then oxidized to spiro-lactone preaustinoid A3 by the combined action of the FAD-binding monooxygenases ausB and ausC, and the dioxygenase ausE. Acid-catalyzed keto-rearrangement and ring contraction of the tetraketide portion of preaustinoid A3 by ausJ lead to the formation of preaustinoid A4. The aldo-keto reductase ausK, with the help of ausH, is involved in the next step by transforming preaustinoid A4 into isoaustinone which is in turn hydroxylated by the P450 monooxygenase ausI to form austinolide. The cytochrome P450 monooxygenase ausG then modifies austinolide to austinol. Austinol is further acetylated to austin by the O-acetyltransferase ausP, which spontaneously changes to dehydroaustin. The cytochrome P450 monooxygenase then converts dehydroaustin is into 7-dehydrodehydroaustin. The hydroxylation catalyzed by ausR permits the second O-acetyltransferase ausQ to add an additional acetyl group to the molecule, leading to the formation of acetoxydehydroaustin. Due to genetic rearrangements of the clusters and the subsequent loss of some enzymes, the end product of the Penicillium brasilianum austinoid biosynthesis clusters is acetoxydehydroaustin. In Penicillium brasilianum, this protein is FAD-dependent monooxygenase ausM.